The sequence spans 457 residues: Chromosomal replication initiator protein DnaA (457 aa).

A domain I, interacts with DnaA modulators region spans residues 1–81 (MERDLSQLWQ…NNTDLVIKVQ (81 aa)). Residues 81–119 (QEGSKPAARKVVAQQEIANTPVQHSAPMPENEPQAAFRS) form a domain II region. The interval 120 to 337 (NLNQHHLFEN…GALNRVHANA (218 aa)) is domain III, AAA+ region. Residues Gly-165, Gly-167, Lys-168, and Thr-169 each coordinate ATP. Residues 338–457 (DFTGKAITID…WSNLIRTLSA (120 aa)) are domain IV, binds dsDNA.

It belongs to the DnaA family. As to quaternary structure, oligomerizes as a right-handed, spiral filament on DNA at oriC.

The protein localises to the cytoplasm. Plays an essential role in the initiation and regulation of chromosomal replication. ATP-DnaA binds to the origin of replication (oriC) to initiate formation of the DNA replication initiation complex once per cell cycle. Binds the DnaA box (a 9 base pair repeat at the origin) and separates the double-stranded (ds)DNA. Forms a right-handed helical filament on oriC DNA; dsDNA binds to the exterior of the filament while single-stranded (ss)DNA is stabiized in the filament's interior. The ATP-DnaA-oriC complex binds and stabilizes one strand of the AT-rich DNA unwinding element (DUE), permitting loading of DNA polymerase. After initiation quickly degrades to an ADP-DnaA complex that is not apt for DNA replication. Binds acidic phospholipids. This Mannheimia succiniciproducens (strain KCTC 0769BP / MBEL55E) protein is Chromosomal replication initiator protein DnaA.